We begin with the raw amino-acid sequence, 64 residues long: Defensin beta 4A (64 aa).

Residues 1 to 23 (MRVLYLLFSFLFIFLMPLPGVFG) form the signal peptide. Intrachain disulfides connect Cys-31–Cys-60, Cys-38–Cys-53, and Cys-43–Cys-61. A phosphatidylinositol 4,5-bisphosphate (PIP2) binding region spans residues 33 to 48 (KNGAICHPVFCPRRYK).

Belongs to the beta-defensin family. LAP/TAP subfamily. In terms of assembly, monomer. Homodimer.

The protein resides in the secreted. Exhibits antimicrobial activity against Gram-negative bacteria and Gram-positive bacteria, with highest activity against Gram-negative bacteria. Antimicrobial activity against P.aruginosa seems to be salt-sensitive and is reduced with high salt concentrations greater than 25 mM. Also exhibits antimicrobial activity against the yeast C.albicans. Permeabilizes C.albicans cell membranes via targeting plasma membrane lipid phosphatidylinositol 4,5-bisphosphate (PIP2), thereby leading to cell fragmentation and cell death. Acts as a ligand for C-C chemokine receptor CCR6. Binds to CCR6 and induces chemotactic activity of CCR6-expressing cells, such as immature dendritic cells and memory T cells. This is Defensin beta 4A (DEFB4A) from Macaca mulatta (Rhesus macaque).